The sequence spans 550 residues: Flagellin (550 aa).

Belongs to the bacterial flagellin family.

The protein resides in the secreted. It is found in the bacterial flagellum. Flagellin is the subunit protein which polymerizes to form the filaments of bacterial flagella. In Shigella flexneri, this protein is Flagellin (fliC).